A 125-amino-acid polypeptide reads, in one-letter code: Putative iron-sulfur cluster insertion protein ErpA 2 (125 aa).

3 residues coordinate iron-sulfur cluster: cysteine 53, cysteine 117, and cysteine 119.

The protein belongs to the HesB/IscA family. Homodimer. Iron-sulfur cluster is required as a cofactor.

In terms of biological role, required for insertion of 4Fe-4S clusters. This Polaromonas naphthalenivorans (strain CJ2) protein is Putative iron-sulfur cluster insertion protein ErpA 2.